A 228-amino-acid polypeptide reads, in one-letter code: Phosphoribosylformylglycinamidine synthase subunit PurQ (228 aa).

The Glutamine amidotransferase type-1 domain occupies 3 to 225 (FAVLVFPGSN…LTTLKSGVVT (223 aa)). Cys86 (nucleophile) is an active-site residue. Active-site residues include His194 and Glu196.

In terms of assembly, part of the FGAM synthase complex composed of 1 PurL, 1 PurQ and 2 PurS subunits.

It is found in the cytoplasm. The enzyme catalyses N(2)-formyl-N(1)-(5-phospho-beta-D-ribosyl)glycinamide + L-glutamine + ATP + H2O = 2-formamido-N(1)-(5-O-phospho-beta-D-ribosyl)acetamidine + L-glutamate + ADP + phosphate + H(+). The catalysed reaction is L-glutamine + H2O = L-glutamate + NH4(+). It functions in the pathway purine metabolism; IMP biosynthesis via de novo pathway; 5-amino-1-(5-phospho-D-ribosyl)imidazole from N(2)-formyl-N(1)-(5-phospho-D-ribosyl)glycinamide: step 1/2. Functionally, part of the phosphoribosylformylglycinamidine synthase complex involved in the purines biosynthetic pathway. Catalyzes the ATP-dependent conversion of formylglycinamide ribonucleotide (FGAR) and glutamine to yield formylglycinamidine ribonucleotide (FGAM) and glutamate. The FGAM synthase complex is composed of three subunits. PurQ produces an ammonia molecule by converting glutamine to glutamate. PurL transfers the ammonia molecule to FGAR to form FGAM in an ATP-dependent manner. PurS interacts with PurQ and PurL and is thought to assist in the transfer of the ammonia molecule from PurQ to PurL. This chain is Phosphoribosylformylglycinamidine synthase subunit PurQ, found in Latilactobacillus sakei subsp. sakei (strain 23K) (Lactobacillus sakei subsp. sakei).